A 517-amino-acid polypeptide reads, in one-letter code: Variant surface glycoprotein MVAT5 (517 aa).

Positions 1–21 (MIGKAFIILSLLNELPTPTAA) are cleaved as a signal peptide. 2 cysteine pairs are disulfide-bonded: Cys417–Cys430 and Cys426–Cys443. Residue Asn435 is glycosylated (N-linked (GlcNAc...) asparagine). Positions 454–470 (QAAQTAGAGEGAAGTTT) are enriched in low complexity. The disordered stretch occupies residues 454–487 (QAAQTAGAGEGAAGTTTDKCKDKKKDDCKSPDCK). Positions 471–487 (DKCKDKKKDDCKSPDCK) are enriched in basic and acidic residues. The GPI-anchor amidated aspartate moiety is linked to residue Asp495. The propeptide at 496-517 (SSILLNKQFALMVSAAFVALLF) is removed in mature form.

Its subcellular location is the cell membrane. Its function is as follows. VSG forms a coat on the surface of the parasite. The trypanosome evades the immune response of the host by expressing a series of antigenically distinct VSGs from an estimated 1000 VSG genes. This Trypanosoma brucei rhodesiense protein is Variant surface glycoprotein MVAT5.